The primary structure comprises 177 residues: Zinc metalloproteinase-disintegrin-like scutiarin (177 aa).

Positions 1 to 63 (NPCCDAATCK…ECPADVFHKN (63 aa)) constitute a Disintegrin domain. Disulfide bonds link Cys3-Cys26, Cys17-Cys23, Cys22-Cys48, Cys35-Cys55, Cys42-Cys74, Cys67-Cys79, Cys86-Cys136, Cys101-Cys147, Cys114-Cys124, and Cys131-Cys173. Residues 41-43 (ECD) carry the D/ECD-tripeptide motif. Asp43, Pro44, Glu46, Asp58, and Val59 together coordinate Ca(2+).

Belongs to the venom metalloproteinase (M12B) family. P-III subfamily. P-IIIa sub-subfamily. Monomer. Zn(2+) is required as a cofactor. In terms of processing, glycosylated. As to expression, expressed by the venom gland.

The protein resides in the secreted. Snake venom metalloproteinase that impairs hemostasis in the envenomed animal. The sequence is that of Zinc metalloproteinase-disintegrin-like scutiarin from Crotalus scutulatus scutulatus (Mojave rattlesnake).